A 123-amino-acid chain; its full sequence is Protein Wnt-7a (123 aa).

Ser1 carries the O-palmitoleoyl serine; by PORCN lipid modification. The disordered linker stretch occupies residues 33-61 (VEPVRASRNKRPTFLKIKKPLSYRKPMDT). Cysteines 89 and 104 form a disulfide. Asn90 carries an N-linked (GlcNAc...) asparagine glycan.

The protein belongs to the Wnt family. Forms a soluble 1:1 complex with AFM; this prevents oligomerization and is required for prolonged biological activity. The complex with AFM may represent the physiological form in body fluids. Interacts with FZD5. Interacts with PORCN. Post-translationally, palmitoleoylation is required for efficient binding to frizzled receptors. Depalmitoleoylation leads to Wnt signaling pathway inhibition.

Its subcellular location is the secreted. The protein resides in the extracellular space. The protein localises to the extracellular matrix. Ligand for members of the frizzled family of seven transmembrane receptors that functions in the canonical Wnt/beta-catenin signaling pathway. Plays an important role in embryonic development, including dorsal versus ventral patterning during limb development, skeleton development and urogenital tract development. Required for central nervous system (CNS) angiogenesis and blood-brain barrier regulation. The chain is Protein Wnt-7a (WNT7A) from Meleagris gallopavo (Wild turkey).